Reading from the N-terminus, the 56-residue chain is Small ribosomal subunit protein uS14 (56 aa).

4 residues coordinate Zn(2+): C21, C24, C39, and C42.

This sequence belongs to the universal ribosomal protein uS14 family. As to quaternary structure, component of the 40S small ribosomal subunit. It depends on Zn(2+) as a cofactor.

It localises to the cytoplasm. The protein localises to the cytosol. Its subcellular location is the rough endoplasmic reticulum. Functionally, component of the small ribosomal subunit. The ribosome is a large ribonucleoprotein complex responsible for the synthesis of proteins in the cell. The protein is Small ribosomal subunit protein uS14 (rps29) of Hippocampus comes (Tiger tail seahorse).